Reading from the N-terminus, the 137-residue chain is MQATDSKNKVVYWGTGRRKSAVAAVRLVPGTGAITVNGRDGETHFNRIPTYIQTIKAPLETLGLENEYDIIVKAEGGGLTGQADAVKLGVARALCQLAPENRPPLKSEGYLTRDPRAKERKKYGLHKARKAPQYSKR.

Positions 100–137 are disordered; the sequence is ENRPPLKSEGYLTRDPRAKERKKYGLHKARKAPQYSKR. Positions 118 to 137 are enriched in basic residues; that stretch reads KERKKYGLHKARKAPQYSKR.

It belongs to the universal ribosomal protein uS9 family.

This Microcystis aeruginosa (strain NIES-843 / IAM M-2473) protein is Small ribosomal subunit protein uS9.